The following is a 267-amino-acid chain: MKEILIIIILGIVEGITEFFPISSNGHLILINYIFNIDKENIQNIIKIIQIGPIFSIILLFKEKIKKSITFFYFNINNIKKKLILILFNLVLSCIPISILGFMFYKKLEEFYSPKYISYFLILGSIFFILSEFISLKKIKIDNFKKISFLKYFIIGSSQCFSLLPGVSRLGITISIGLILNIDRYVLFKFSMILFSSIMPAVLILEVYKNFFYLKENIFFVIIGVMSSFLTSLIFGRTAIKIMKNTSLIIFAIYRIFIACIILFTCN.

A run of 8 helical transmembrane segments spans residues 4-24 (ILII…PISS), 41-61 (NIQN…ILLF), 84-104 (ILIL…GFMF), 116-136 (YISY…FISL), 160-180 (CFSL…GLIL), 185-205 (YVLF…VLIL), 216-236 (ENIF…LIFG), and 246-266 (TSLI…LFTC).

This sequence belongs to the UppP family.

The protein localises to the cell membrane. The enzyme catalyses di-trans,octa-cis-undecaprenyl diphosphate + H2O = di-trans,octa-cis-undecaprenyl phosphate + phosphate + H(+). Its function is as follows. Catalyzes the dephosphorylation of undecaprenyl diphosphate (UPP). Confers resistance to bacitracin. The polypeptide is Undecaprenyl-diphosphatase (Wigglesworthia glossinidia brevipalpis).